We begin with the raw amino-acid sequence, 861 residues long: Leucine--tRNA ligase (861 aa).

The 'HIGH' region signature appears at 42–52; the sequence is PYPSGKLHMGH. The 'KMSKS' region signature appears at 618–622; the sequence is KMSKS. Lysine 621 contacts ATP.

It belongs to the class-I aminoacyl-tRNA synthetase family.

It localises to the cytoplasm. It carries out the reaction tRNA(Leu) + L-leucine + ATP = L-leucyl-tRNA(Leu) + AMP + diphosphate. In Buchnera aphidicola subsp. Baizongia pistaciae (strain Bp), this protein is Leucine--tRNA ligase.